An 836-amino-acid polypeptide reads, in one-letter code: Sucrose synthase 5 (836 aa).

The tract at residues 270–748 (RIFNVVIFSV…GLQRINECYT (479 aa)) is GT-B glycosyltransferase. Positions 805–836 (PPPLPPKPLVKPSASKGSKRTQPRLSFRLFGA) are disordered.

Belongs to the glycosyltransferase 1 family. Plant sucrose synthase subfamily. Detected in the whole plant but more precisely confined to the vasculature in cotyledons, leaves, petals, anthers and roots. Also detected in developing siliques, young immature rosette and cauline leaves.

It localises to the secreted. Its subcellular location is the cell wall. The enzyme catalyses an NDP-alpha-D-glucose + D-fructose = a ribonucleoside 5'-diphosphate + sucrose + H(+). In terms of biological role, sucrose-cleaving enzyme that provides UDP-glucose and fructose for various metabolic pathways. Functions in callose synthesis at the site of phloem sieve elements. This is Sucrose synthase 5 (SUS5) from Arabidopsis thaliana (Mouse-ear cress).